Here is a 495-residue protein sequence, read N- to C-terminus: Tripartite motif-containing protein 5 (495 aa).

Ala2 is subject to N-acetylalanine. The RING-type zinc finger occupies 15–60 (CPICLELLTEPLSLHCGHSFCQACITANHKKSMLYKEGERSCPVCR). Ser87 is modified (phosphoserine). The segment at 92–133 (QKVDHCARHGEKLLLFCQEDSKVICWLCERSQEHRGHHTFLM) adopts a B box-type zinc-finger fold. Residues Cys97, His100, Cys119, and His125 each coordinate Zn(2+). A coiled-coil region spans residues 137 to 223 (AQEYHVKLQT…KSLTKSETKM (87 aa)). The segment at 187 to 200 (FEQLREILDREESN) is required for interaction with GABARAP and for autophagy. The B30.2/SPRY domain maps to 283 to 495 (LKGMLDMFRE…VPMTLCSPSS (213 aa)).

It belongs to the TRIM/RBCC family. As to quaternary structure, can form homodimers and homotrimers. In addition to lower-order dimerization, also exhibits a higher-order multimerization and both low- and high-order multimerizations are essential for its restriction activity. Interacts with BTBD1 and BTBD2. Interacts with PSMC4, PSMC5, PSMD7 and HSPA8/HSC70. Interacts (via B30.2/SPRY domain) with HSPA1A/B. Interacts with PSMC2, MAP3K7/TAK1, TAB2 and TAB3. Interacts with SQSTM1. Interacts with TRIM6 and TRIM34. Interacts with ULK1 (phosphorylated form), GABARAP, GABARAPL1, GABARAPL2, MAP1LC3A, MAP1LC3C and BECN1. Degraded in a proteasome-independent fashion in the absence of viral infection but in a proteasome-dependent fashion following exposure to restriction sensitive virus. In terms of processing, autoubiquitinated in a RING finger- and UBE2D2-dependent manner. Monoubiquitinated by TRIM21. Deubiquitinated by Yersinia YopJ. Ubiquitination may not lead to proteasomal degradation.

The protein resides in the cytoplasm. The protein localises to the nucleus. It catalyses the reaction S-ubiquitinyl-[E2 ubiquitin-conjugating enzyme]-L-cysteine + [acceptor protein]-L-lysine = [E2 ubiquitin-conjugating enzyme]-L-cysteine + N(6)-ubiquitinyl-[acceptor protein]-L-lysine.. The protein operates within protein modification; protein ubiquitination. Capsid-specific restriction factor that prevents infection from non-host-adapted retroviruses. Blocks viral replication early in the life cycle, after viral entry but before reverse transcription. In addition to acting as a capsid-specific restriction factor, also acts as a pattern recognition receptor that activates innate immune signaling in response to the retroviral capsid lattice. Binding to the viral capsid triggers its E3 ubiquitin ligase activity, and in concert with the heterodimeric ubiquitin conjugating enzyme complex UBE2V1-UBE2N (also known as UBC13-UEV1A complex) generates 'Lys-63'-linked polyubiquitin chains, which in turn are catalysts in the autophosphorylation of the MAP3K7/TAK1 complex (includes TAK1, TAB2, and TAB3). Activation of the MAP3K7/TAK1 complex by autophosphorylation results in the induction and expression of NF-kappa-B and MAPK-responsive inflammatory genes, thereby leading to an innate immune response in the infected cell. Plays a role in regulating autophagy through activation of autophagy regulator BECN1 by causing its dissociation from its inhibitors BCL2 and TAB2. The protein is Tripartite motif-containing protein 5 (TRIM5) of Macaca nemestrina (Pig-tailed macaque).